Consider the following 284-residue polypeptide: UTP--glucose-1-phosphate uridylyltransferase (284 aa).

The protein belongs to the UDPGP type 2 family.

The enzyme catalyses alpha-D-glucose 1-phosphate + UTP + H(+) = UDP-alpha-D-glucose + diphosphate. This Komagataeibacter xylinus (Gluconacetobacter xylinus) protein is UTP--glucose-1-phosphate uridylyltransferase (celA).